The following is an 892-amino-acid chain: Phenylalanine--tRNA ligase beta subunit (892 aa).

The tRNA-binding domain occupies 39–150 (NPGVEGVVVG…PGLEPGMDVA (112 aa)). Positions 406 to 569 (AVPPVILLRT…RCEGYDAIPL (164 aa)) constitute a B5 domain. The tract at residues 442-518 (VLTPADLAAD…ALLGGGESDG (77 aa)) is insert. Residues D547, D553, E556, and E557 each coordinate Mg(2+). One can recognise an FDX-ACB domain in the interval 799–891 (PRFPAVTRDV…ALKALGAELR (93 aa)).

This sequence belongs to the phenylalanyl-tRNA synthetase beta subunit family. Type 1 subfamily. As to quaternary structure, tetramer of two alpha and two beta subunits. It depends on Mg(2+) as a cofactor.

It localises to the cytoplasm. It catalyses the reaction tRNA(Phe) + L-phenylalanine + ATP = L-phenylalanyl-tRNA(Phe) + AMP + diphosphate + H(+). The sequence is that of Phenylalanine--tRNA ligase beta subunit from Symbiobacterium thermophilum (strain DSM 24528 / JCM 14929 / IAM 14863 / T).